Here is a 99-residue protein sequence, read N- to C-terminus: Putative protein tag-209 (99 aa).

A signal peptide spans 1-16 (MLKLLAFVALLSVSVS).

This chain is Putative protein tag-209 (tag-209), found in Caenorhabditis elegans.